The sequence spans 104 residues: Chemokine-like protein MC148 (104 aa).

Interacts with host CXCL12.

Its function is as follows. Plays a role in antagonizing the chemotaxis of multiple leukocyte subsets induced by CC and CXC chemokines. Displaces the interaction between CXCL12 and CXCR4 and thereby inactivates the antiviral activity of host CXCL12. This chain is Chemokine-like protein MC148 (MC148), found in Homo sapiens (Human).